The chain runs to 328 residues: MTATKQHKKVILVGDGAVGSSYAFALVNQGIAQELGIIEIPQLFEKAVGDAEDLSHALAFTSPKKIYAATYADCADADLVVITAGAPQKPGETRLDLVGKNLAINKSIVTQVVESGFNGIFLVAANPVDVLTYSTWKFSGFPKERVIGSGTSLDSARFRQALAEKIGIDARSVHAYIMGEHGDSEFAVWSHANVAGVKLEQWLQANRDLNEQDLVDLFISVRDAAYSIINKKGATYYGIAVALARITKAILDDENAVLPLSVFQEGQYGVENVFIGQPAIVGAHGIVRPVNIPLNDAETQKMQASAKELQAIIDEAWKNPEFQEASKN.

NAD(+) is bound by residues Val18, Glu39, Lys46, Tyr71, and 85–86 (GA). 2 residues coordinate substrate: Gln88 and Arg94. NAD(+) is bound by residues Ser107, 124–126 (AAN), and Ser149. 126–129 (NPVD) is a binding site for substrate. Position 154 to 157 (154 to 157 (DSAR)) interacts with substrate. 2 residues coordinate beta-D-fructose 1,6-bisphosphate: Arg159 and His174. His181 functions as the Proton acceptor in the catalytic mechanism. At Tyr226 the chain carries Phosphotyrosine. Position 235 (Thr235) interacts with substrate.

It belongs to the LDH/MDH superfamily. LDH family. Homotetramer.

The protein localises to the cytoplasm. The catalysed reaction is (S)-lactate + NAD(+) = pyruvate + NADH + H(+). It functions in the pathway fermentation; pyruvate fermentation to lactate; (S)-lactate from pyruvate: step 1/1. Its activity is regulated as follows. Allosterically activated by fructose 1,6-bisphosphate (FBP). Its function is as follows. Catalyzes the conversion of lactate to pyruvate. The sequence is that of L-lactate dehydrogenase from Streptococcus sanguinis (strain SK36).